The following is a 335-amino-acid chain: Glyceraldehyde-3-phosphate dehydrogenase (335 aa).

NAD(+) is bound by residues 12–13 (RI), Asp36, Arg80, and Ser122. D-glyceraldehyde 3-phosphate-binding positions include 152 to 154 (SCT), Thr183, Arg198, 211 to 212 (TG), and Arg234. Residue Cys153 is the Nucleophile of the active site. Residue Asn316 coordinates NAD(+).

This sequence belongs to the glyceraldehyde-3-phosphate dehydrogenase family. In terms of assembly, homotetramer.

It localises to the cytoplasm. It catalyses the reaction D-glyceraldehyde 3-phosphate + phosphate + NAD(+) = (2R)-3-phospho-glyceroyl phosphate + NADH + H(+). It participates in carbohydrate degradation; glycolysis; pyruvate from D-glyceraldehyde 3-phosphate: step 1/5. In terms of biological role, catalyzes the oxidative phosphorylation of glyceraldehyde 3-phosphate (G3P) to 1,3-bisphosphoglycerate (BPG) using the cofactor NAD. The first reaction step involves the formation of a hemiacetal intermediate between G3P and a cysteine residue, and this hemiacetal intermediate is then oxidized to a thioester, with concomitant reduction of NAD to NADH. The reduced NADH is then exchanged with the second NAD, and the thioester is attacked by a nucleophilic inorganic phosphate to produce BPG. This is Glyceraldehyde-3-phosphate dehydrogenase (gap) from Xanthobacter flavus.